We begin with the raw amino-acid sequence, 54 residues long: Putative ATP synthase subunit epsilon, mitochondrial (54 aa).

Belongs to the eukaryotic ATPase epsilon family. As to quaternary structure, F-type ATPases have 2 components, CF(1) - the catalytic core - and CF(0) - the membrane proton channel. CF(1) has five subunits: alpha(3), beta(3), gamma(1), delta(1), epsilon(1). CF(0) seems to have nine subunits: a, b, c, d, e, f, g, F6 and 8 (or A6L).

The protein resides in the mitochondrion. Its subcellular location is the mitochondrion inner membrane. Functionally, mitochondrial membrane ATP synthase (F(1)F(0) ATP synthase or Complex V) produces ATP from ADP in the presence of a proton gradient across the membrane which is generated by electron transport complexes of the respiratory chain. F-type ATPases consist of two structural domains, F(1) - containing the extramembraneous catalytic core, and F(0) - containing the membrane proton channel, linked together by a central stalk and a peripheral stalk. During catalysis, ATP synthesis in the catalytic domain of F(1) is coupled via a rotary mechanism of the central stalk subunits to proton translocation. Part of the complex F(1) domain and of the central stalk which is part of the complex rotary element. Rotation of the central stalk against the surrounding alpha(3)beta(3) subunits leads to hydrolysis of ATP in three separate catalytic sites on the beta subunits. In Caenorhabditis elegans, this protein is Putative ATP synthase subunit epsilon, mitochondrial.